The sequence spans 446 residues: Putative ZDHHC-type palmitoyltransferase 2 (446 aa).

Disordered stretches follow at residues 1–33 (MNLY…INNN) and 56–83 (QIIN…HNNP). 4 N-linked (GlcNAc...) asparagine glycosylation sites follow: Asn5, Asn8, Asn14, and Asn21. The span at 56–81 (QIINKNNNNNHNRNNNNNNNNNNNHN) shows a compositional bias: low complexity. Asn141, Asn145, Asn159, and Asn165 each carry an N-linked (GlcNAc...) asparagine glycan. 5 helical membrane-spanning segments follow: residues 178 to 198 (IVIF…IFPW), 210 to 230 (IHSF…YLCS), 305 to 325 (YFVL…TLLI), 349 to 369 (LFLL…IMAL), and 410 to 430 (IISN…LPTI). The 51-residue stretch at 261–311 (KWCNKCNHQKPERAHHCRYCNRCVLRMDHHCQWLQNCIGLFNQKYFVLFLF) folds into the DHHC domain.

This sequence belongs to the DHHC palmitoyltransferase family.

The protein localises to the membrane. It catalyses the reaction L-cysteinyl-[protein] + hexadecanoyl-CoA = S-hexadecanoyl-L-cysteinyl-[protein] + CoA. This is Putative ZDHHC-type palmitoyltransferase 2 from Dictyostelium discoideum (Social amoeba).